Reading from the N-terminus, the 273-residue chain is Suppressor protein STM1 (273 aa).

A disordered region spans residues 1-153 (MSNPFDLLGN…PKTAQLSLQD (153 aa)). The residue at position 2 (serine 2) is an N-acetylserine. A phosphoserine; by MTOR mark is found at serine 32, serine 41, and serine 45. A Glycyl lysine isopeptide (Lys-Gly) (interchain with G-Cter in ubiquitin) cross-link involves residue lysine 46. 2 positions are modified to phosphoserine; by MTOR: serine 55 and serine 73. Serine 55 bears the Phosphoserine mark. Composition is skewed to basic and acidic residues over residues 60–77 (AIRD…KDVT), 89–104 (RATD…DTKK), and 111–124 (GDDK…KEAQ). Residue serine 118 is modified to Phosphoserine. Residues lysine 121 and lysine 171 each participate in a glycyl lysine isopeptide (Lys-Gly) (interchain with G-Cter in ubiquitin) cross-link. Phosphothreonine; by MTOR is present on threonine 181. Residue lysine 184 forms a Glycyl lysine isopeptide (Lys-Gly) (interchain with G-Cter in ubiquitin) linkage. Threonine 218 carries the phosphothreonine; by MTOR modification. The segment at 219–273 (RKNFGDRNNNSRNNFNNRRGGRGARKGNNTANATNSANTVQKNRNIDVSNLPSLA) is disordered. 2 stretches are compositionally biased toward low complexity: residues 224-236 (DRNN…FNNR) and 244-257 (KGNN…SANT). Serine 229 carries the post-translational modification Phosphoserine. Residues 258-273 (VQKNRNIDVSNLPSLA) are compositionally biased toward polar residues.

The protein belongs to the SERBP1-HABP4 family. In terms of assembly, associates with mature 80S ribosomes. Binds to the head domain of the 40S ribosomal subunit and prevents mRNA binding by inserting its alpha-helix domain towards the mRNA entry tunnel at the decoding site, where it blocks the binding of tRNA and mRNA at the A- and P-sites. Interacts with EFT1; interaction sequesters EFT1 at the A-site of the ribosome, thereby blocking the interaction sites of the mRNA-tRNA complex, promoting ribosome stabilization and hibernation. Interacts with CDC13. Associates with the telomere-proximal Y' element. In terms of processing, phosphorylation by TORC1 upon nutrient replenishment inhibits STM1 and causes its release from dormant ribosomes.

The protein localises to the cytoplasm. It localises to the nucleus. It is found in the perinuclear region. In terms of biological role, ribosome preservation factor that protect a small pool of nontranslating, vacant ribosomes in cells under nutrient starvation conditions. Under nutrient-limiting conditions, cells reduce ribosome biogenesis and degrade ribosomes via autophagy (ribophagy) or proteasomal degradation. To avoid excessive degradation during starvation, STM1 binds to and protects 80S ribosomes from proteasomal degradation. Under nutrient-sufficient conditions, TORC1 phosphorylates and inhibits STM1 to prevent formation of dormant 80S ribosomes. Acts as an inhibitor of mRNA translation by promoting ribosome hibernation: clamps the two ribosomal subunits, thereby preventing their dissociation, and inhibits translation by excluding mRNA-binding. Acts via its association with eEF2 (EFT1), promoting ribosome stabilization and storage in an inactive state. May also repress translation by preventing association of eEF3 (YEF3 and HEF3) with ribosomes. Binds specifically G4 quadruplex (these are four-stranded right-handed helices, stabilized by guanine base quartets) and purine motif triplex (characterized by a third, antiparallel purine-rich DNA strand located within the major groove of a homopurine stretch of duplex DNA) nucleic acid structures. These structures may be present at telomeres or in rRNAs. Acts with CDC13 to control telomere length homeostasis. Involved in the control of the apoptosis-like cell death. The sequence is that of Suppressor protein STM1 from Saccharomyces cerevisiae (strain ATCC 204508 / S288c) (Baker's yeast).